We begin with the raw amino-acid sequence, 125 residues long: MSRATNAKTNHARHKKVLDLAKGYRGRNSTNFRIAIEKVEKGLQYAYRDRRAKKRNFRSLWIQRINAGAREQGLTYSQFINGLIRAGIELDRKILADLAVTEPAAFASLVAQAKAALDTTAEQAA.

It belongs to the bacterial ribosomal protein bL20 family.

In terms of biological role, binds directly to 23S ribosomal RNA and is necessary for the in vitro assembly process of the 50S ribosomal subunit. It is not involved in the protein synthesizing functions of that subunit. The polypeptide is Large ribosomal subunit protein bL20 (Rhodospirillum rubrum (strain ATCC 11170 / ATH 1.1.1 / DSM 467 / LMG 4362 / NCIMB 8255 / S1)).